The primary structure comprises 500 residues: Lysine--tRNA ligase (500 aa).

2 residues coordinate Mg(2+): Glu410 and Glu417.

This sequence belongs to the class-II aminoacyl-tRNA synthetase family. Homodimer. The cofactor is Mg(2+).

The protein localises to the cytoplasm. It carries out the reaction tRNA(Lys) + L-lysine + ATP = L-lysyl-tRNA(Lys) + AMP + diphosphate. The sequence is that of Lysine--tRNA ligase from Shewanella putrefaciens (strain CN-32 / ATCC BAA-453).